Reading from the N-terminus, the 274-residue chain is tRNA-cytidine(32) 2-sulfurtransferase (274 aa).

A PP-loop motif motif is present at residues 40–45; the sequence is SGGKDS. Cys-115, Cys-118, and Cys-206 together coordinate [4Fe-4S] cluster.

The protein belongs to the TtcA family. As to quaternary structure, homodimer. It depends on Mg(2+) as a cofactor. Requires [4Fe-4S] cluster as cofactor.

It localises to the cytoplasm. The enzyme catalyses cytidine(32) in tRNA + S-sulfanyl-L-cysteinyl-[cysteine desulfurase] + AH2 + ATP = 2-thiocytidine(32) in tRNA + L-cysteinyl-[cysteine desulfurase] + A + AMP + diphosphate + H(+). It functions in the pathway tRNA modification. Catalyzes the ATP-dependent 2-thiolation of cytidine in position 32 of tRNA, to form 2-thiocytidine (s(2)C32). The sulfur atoms are provided by the cysteine/cysteine desulfurase (IscS) system. The chain is tRNA-cytidine(32) 2-sulfurtransferase from Azotobacter vinelandii (strain DJ / ATCC BAA-1303).